The sequence spans 113 residues: Putative gene 57 protein (113 aa).

The chain is Putative gene 57 protein (57) from Bacillus phage SP01 (Bacteriophage SP01).